The primary structure comprises 495 residues: Glutamyl-tRNA(Gln) amidotransferase subunit A (495 aa).

Catalysis depends on charge relay system residues lysine 75 and serine 150. The Acyl-ester intermediate role is filled by serine 174.

The protein belongs to the amidase family. GatA subfamily. In terms of assembly, heterotrimer of A, B and C subunits.

The enzyme catalyses L-glutamyl-tRNA(Gln) + L-glutamine + ATP + H2O = L-glutaminyl-tRNA(Gln) + L-glutamate + ADP + phosphate + H(+). In terms of biological role, allows the formation of correctly charged Gln-tRNA(Gln) through the transamidation of misacylated Glu-tRNA(Gln) in organisms which lack glutaminyl-tRNA synthetase. The reaction takes place in the presence of glutamine and ATP through an activated gamma-phospho-Glu-tRNA(Gln). The sequence is that of Glutamyl-tRNA(Gln) amidotransferase subunit A from Ralstonia nicotianae (strain ATCC BAA-1114 / GMI1000) (Ralstonia solanacearum).